The primary structure comprises 483 residues: Protein disulfide-isomerase 5-3 (483 aa).

3 N-linked (GlcNAc...) asparagine glycosylation sites follow: asparagine 53, asparagine 74, and asparagine 99. Positions glutamate 133–alanine 263 constitute a Thioredoxin domain. Catalysis depends on cysteine 170, which acts as the Nucleophile. 3 N-linked (GlcNAc...) asparagine glycosylation sites follow: asparagine 279, asparagine 326, and asparagine 376. The helical transmembrane segment at phenylalanine 442–isoleucine 462 threads the bilayer.

This sequence belongs to the protein disulfide isomerase family. As to expression, widely expressed.

It is found in the membrane. In terms of biological role, acts as a protein-folding catalyst that interacts with nascent polypeptides to catalyze the formation, isomerization, and reduction or oxidation of disulfide bonds. This is Protein disulfide-isomerase 5-3 (PDIL5-3) from Arabidopsis thaliana (Mouse-ear cress).